The chain runs to 364 residues: GTPase Obg (364 aa).

An Obg domain is found at 1–161; sequence MRFVDEVTIS…KYLRLELKIL (161 aa). One can recognise an OBG-type G domain in the interval 162–334; sequence ADAGIIGLPN…LVDAIWKLQS (173 aa). GTP contacts are provided by residues 168–175, 193–197, 217–220, 287–290, and 315–317; these read GLPNAGKS, FTTLN, DIPG, NKID, and SAE. Ser175 and Thr195 together coordinate Mg(2+).

Belongs to the TRAFAC class OBG-HflX-like GTPase superfamily. OBG GTPase family. In terms of assembly, monomer. Requires Mg(2+) as cofactor.

It is found in the cytoplasm. In terms of biological role, an essential GTPase which binds GTP, GDP and possibly (p)ppGpp with moderate affinity, with high nucleotide exchange rates and a fairly low GTP hydrolysis rate. Plays a role in control of the cell cycle, stress response, ribosome biogenesis and in those bacteria that undergo differentiation, in morphogenesis control. The polypeptide is GTPase Obg (Lawsonia intracellularis (strain PHE/MN1-00)).